A 127-amino-acid chain; its full sequence is Large ribosomal subunit protein bL12 (127 aa).

This sequence belongs to the bacterial ribosomal protein bL12 family. In terms of assembly, homodimer. Part of the ribosomal stalk of the 50S ribosomal subunit. Forms a multimeric L10(L12)X complex, where L10 forms an elongated spine to which 2 to 4 L12 dimers bind in a sequential fashion. Binds GTP-bound translation factors.

In terms of biological role, forms part of the ribosomal stalk which helps the ribosome interact with GTP-bound translation factors. Is thus essential for accurate translation. The protein is Large ribosomal subunit protein bL12 of Streptomyces coelicolor (strain ATCC BAA-471 / A3(2) / M145).